The chain runs to 474 residues: Cobyric acid synthase (474 aa).

Residues 251 to 431 (TGFVAIPRLP…LHGLLENSAY (181 aa)) enclose the GATase cobBQ-type domain. Residue Cys-328 is the Nucleophile of the active site. The active site involves His-423.

It belongs to the CobB/CobQ family. CobQ subfamily.

It functions in the pathway cofactor biosynthesis; adenosylcobalamin biosynthesis. Its function is as follows. Catalyzes amidations at positions B, D, E, and G on adenosylcobyrinic A,C-diamide. NH(2) groups are provided by glutamine, and one molecule of ATP is hydrogenolyzed for each amidation. The protein is Cobyric acid synthase of Deinococcus radiodurans (strain ATCC 13939 / DSM 20539 / JCM 16871 / CCUG 27074 / LMG 4051 / NBRC 15346 / NCIMB 9279 / VKM B-1422 / R1).